The following is a 509-amino-acid chain: MPIRLHIFVSSARHAINSSALICRFIAFHLSPLLIHLSYFLIIDVLGFVALVVLRPSNHKYNPRYIDMFFLSTSAVTVTGLATTQMEDLSSSQIAVLTLLMFLGSEMFLSFLGLVLESSKQNKHDPENRRVSSVTVCEQSHLEEAIPQTPSMNSTDIKRSCHKYLVFVVLAYMIIILVTGSLLVFMYIAHVSSARDVLTRKSINKALFSISVTVSSFTNGGLLPTNESMAVFSSNNGLLLLLIGQILAGSTLLPMFLRLVIWALRGLRLAKAEEPDFMMNNSSSVGFSHLLPNLQTIFLAAVEVAFVGMTVILFCCLNWDSAVFAGLTSLQKITNALFMAVSARQAGENSIDCSLVAPAALVLFMVMMYTPSLTKLFSACQDHKQIGPESDDRTSKGKPFLKTMAFSPLAFNTTVIMLVCITERRSISTDPLNFSTFNIIFEVISAYGNIGLSTGYSCSRQLQHQDGIACHEKPYSFSGWWSEPGKLILVLAMLYGRLNSKDSTSARTR.

Residues 1 to 32 lie on the Cytoplasmic side of the membrane; the sequence is MPIRLHIFVSSARHAINSSALICRFIAFHLSP. The next 2 helical transmembrane spans lie at 33–53 and 96–116; these read LLIH…ALVV and VLTL…GLVL. The Cytoplasmic segment spans residues 117-164; it reads ESSKQNKHDPENRRVSSVTVCEQSHLEEAIPQTPSMNSTDIKRSCHKY. 2 helical membrane-spanning segments follow: residues 165–185 and 237–257; these read LVFV…LLVF and GLLL…PMFL. The Cytoplasmic portion of the chain corresponds to 258–296; sequence RLVIWALRGLRLAKAEEPDFMMNNSSSVGFSHLLPNLQT. The next 2 helical transmembrane spans lie at 297–317 and 353–373; these read IFLA…FCCL and CSLV…TPSL. Residues 374–400 lie on the Cytoplasmic side of the membrane; that stretch reads TKLFSACQDHKQIGPESDDRTSKGKPF. Transmembrane regions (helical) follow at residues 401-421 and 476-496; these read LKTM…LVCI and SFSG…MLYG. The Cytoplasmic segment spans residues 497-509; it reads RLNSKDSTSARTR.

Belongs to the TrkH potassium transport family. HKT (TC 2.A.38.3) subfamily. In terms of tissue distribution, expressed in spikelets, leaf blades, leaf sheaths, internodes, nodes, the base of stems and roots.

It localises to the cell membrane. It carries out the reaction K(+)(in) = K(+)(out). The catalysed reaction is Mg(2+)(in) = Mg(2+)(out). It catalyses the reaction Ca(2+)(in) = Ca(2+)(out). Its function is as follows. High-affinity potassium transporter that does not show potassium-sodium cotransport. Potassium transport seems to be independent of sodium. Mediates transport of the divalent cations magnesium and calcium in the absence of competing potassium ions. Selectivity for potassium is dominant over divalent cations, and magnesium and calcium transport may be small and may depend on competing potassium concentrations. The polypeptide is Cation transporter HKT2;4 (Oryza sativa subsp. japonica (Rice)).